The chain runs to 376 residues: GDSL esterase/lipase 2 (376 aa).

An N-terminal signal peptide occupies residues M1–C25. A glycan (N-linked (GlcNAc...) asparagine) is linked at N36. The Nucleophile role is filled by S46. N-linked (GlcNAc...) asparagine glycosylation is found at N186 and N205. Active-site residues include D340 and H343. The N-linked (GlcNAc...) asparagine glycan is linked to N362.

It belongs to the 'GDSL' lipolytic enzyme family. As to expression, expressed seedlings, roots and stems.

Its subcellular location is the secreted. Functionally, involved in the resistance to the necrotropic bacteria Erwinia carotovora, probably via negative regulation of auxin signaling. Possesses lipase and antimicrobial activities, inhibiting germination of fungal spores (e.g. Alternaria brassicicola). The protein is GDSL esterase/lipase 2 (GLIP2) of Arabidopsis thaliana (Mouse-ear cress).